The following is a 97-amino-acid chain: Co-chaperonin GroES (97 aa).

It belongs to the GroES chaperonin family. In terms of assembly, heptamer of 7 subunits arranged in a ring. Interacts with the chaperonin GroEL.

It is found in the cytoplasm. Its function is as follows. Together with the chaperonin GroEL, plays an essential role in assisting protein folding. The GroEL-GroES system forms a nano-cage that allows encapsulation of the non-native substrate proteins and provides a physical environment optimized to promote and accelerate protein folding. GroES binds to the apical surface of the GroEL ring, thereby capping the opening of the GroEL channel. In Pectobacterium carotovorum subsp. carotovorum (strain PC1), this protein is Co-chaperonin GroES.